The primary structure comprises 485 residues: Glutamyl-tRNA(Gln) amidotransferase subunit A (485 aa).

Catalysis depends on charge relay system residues Lys78 and Ser153. Ser177 functions as the Acyl-ester intermediate in the catalytic mechanism.

This sequence belongs to the amidase family. GatA subfamily. Heterotrimer of A, B and C subunits.

The catalysed reaction is L-glutamyl-tRNA(Gln) + L-glutamine + ATP + H2O = L-glutaminyl-tRNA(Gln) + L-glutamate + ADP + phosphate + H(+). In terms of biological role, allows the formation of correctly charged Gln-tRNA(Gln) through the transamidation of misacylated Glu-tRNA(Gln) in organisms which lack glutaminyl-tRNA synthetase. The reaction takes place in the presence of glutamine and ATP through an activated gamma-phospho-Glu-tRNA(Gln). The sequence is that of Glutamyl-tRNA(Gln) amidotransferase subunit A from Geotalea daltonii (strain DSM 22248 / JCM 15807 / FRC-32) (Geobacter daltonii).